We begin with the raw amino-acid sequence, 308 residues long: Methionyl-tRNA formyltransferase (308 aa).

A (6S)-5,6,7,8-tetrahydrofolate-binding site is contributed by 110 to 113 (SLLP).

Belongs to the Fmt family.

The catalysed reaction is L-methionyl-tRNA(fMet) + (6R)-10-formyltetrahydrofolate = N-formyl-L-methionyl-tRNA(fMet) + (6S)-5,6,7,8-tetrahydrofolate + H(+). In terms of biological role, attaches a formyl group to the free amino group of methionyl-tRNA(fMet). The formyl group appears to play a dual role in the initiator identity of N-formylmethionyl-tRNA by promoting its recognition by IF2 and preventing the misappropriation of this tRNA by the elongation apparatus. The chain is Methionyl-tRNA formyltransferase from Neisseria gonorrhoeae (strain ATCC 700825 / FA 1090).